Reading from the N-terminus, the 112-residue chain is Nitrogen regulatory protein P-II (112 aa).

An O-UMP-tyrosine modification is found at Tyr-51.

The protein belongs to the P(II) protein family. In terms of assembly, homotrimer.

Functionally, in nitrogen-limiting conditions, when the ratio of Gln to 2-ketoglutarate decreases, P-II is uridylylated to P-II-UMP. P-II-UMP allows the deadenylation of glutamine synthetase (GS), thus activating the enzyme. Conversely, in nitrogen excess P-II is deuridylated and promotes the adenylation of GS. P-II indirectly controls the transcription of the GS gene (glnA). P-II prevents NR-II-catalyzed conversion of NR-I to NR-I-phosphate, the transcriptional activator of glnA. When P-II is uridylylated to P-II-UMP, these events are reversed. This is Nitrogen regulatory protein P-II (glnB) from Mycobacterium bovis (strain ATCC BAA-935 / AF2122/97).